An 853-amino-acid chain; its full sequence is DNA mismatch repair protein MutS (853 aa).

614–621 (GPNMGGKS) is a binding site for ATP.

Belongs to the DNA mismatch repair MutS family.

Its function is as follows. This protein is involved in the repair of mismatches in DNA. It is possible that it carries out the mismatch recognition step. This protein has a weak ATPase activity. The sequence is that of DNA mismatch repair protein MutS from Shigella dysenteriae serotype 1 (strain Sd197).